The primary structure comprises 350 residues: Trans-enoyl reductase iliB (350 aa).

50–53 contacts NADP(+); that stretch reads VDGK. Residue 145–152 coordinates substrate; that stretch reads AAIATVGL. NADP(+) contacts are provided by residues 177 to 180, Tyr-195, and 242 to 243; these read SAAS and LD. Residue 262 to 266 participates in substrate binding; that stretch reads TPTQF. 331–332 serves as a coordination point for NADP(+); it reads IK.

The protein belongs to the zinc-containing alcohol dehydrogenase family. In terms of assembly, monomer.

It carries out the reaction N-[(4E,6E,10S,12Z,14E)-6,10-dimethyl-3-oxohexadeca-4,6,12,14-tetraenoyl]-L-tyrosyl-[ACP] = (3E,5S)-3-[(2E,4E,8S,10E,12Z)-1-hydroxy-4,8-dimethyltetradeca-2,4,10,12-tetraen-1-ylidene]-5-[(4-hydroxyphenyl)methyl]pyrrolidine-2,4-dione + holo-[ACP] + H(+). It participates in mycotoxin biosynthesis. Trans-enoyl reductase; part of the gene cluster that mediates the biosynthesis of ilicicolin H, a 4-hydroxy-2-pyridonealkaloid that has potent and broad antifungal activities by inhibiting the mitochondrial respiration chain. IliB collaborates with the hybrid PKS-NRPS synthetase iliA to assemble the backbone of ilicicolin H. The PKS portion of iliA and trans-acting enoyl reductase iliB work together to construct an octaketide, and two methyl groups are introduced by the MT domain of iliA during the chain assembly. The nascent chain is then condensed with tyrosine, catalyzed by the iliA C domain, and the resulting PKS-NRPS hybrid is offloaded by the iliA RED domain to form an advanced tetramic acid intermediate. The biosynthesis of ilicicolin H starts with formation of the tetramic acid by the hybrid PKS-NRPS synthetase iliA with the partnering trans-enoyl reductase iliB since iliA lacks a designated enoylreductase (ER) domain. The cytochrome P450 monooxygenase iliC then catalyzes the ring expansion of the tetramate to the acyclic 2-pyridone. The pericyclase iliD further converts the acyclic 2-pyridone into 8-epi-ilicicolin H. 8-epi-ilicicolin H might then spontaneously convert to ilicicolin H since ilicicolin H is produced in the absence of the epimerase iliE, in contrast to what was observed for the Talaromyces variabilis ilicolin H biosynthetic pathway. This is Trans-enoyl reductase iliB from Hypocrea jecorina (strain QM6a) (Trichoderma reesei).